The primary structure comprises 655 residues: Chaperone protein dnaK1 (655 aa).

Threonine 197 carries the phosphothreonine; by autocatalysis modification.

It belongs to the heat shock protein 70 family.

Its function is as follows. Acts as a chaperone. This chain is Chaperone protein dnaK1 (dnaK1), found in Synechococcus elongatus (strain ATCC 33912 / PCC 7942 / FACHB-805) (Anacystis nidulans R2).